A 162-amino-acid polypeptide reads, in one-letter code: MTEEIAGFQTSPKAQVQAAFEEIARRSMHALSFLHPSMPVYVSDFTLFEGQWTGCVITPWMLSAVIFPGPDQLWPLRKVSEKIGLQLPYGTMTFTVGELDGVSQYLSCSLMSPLSHSMSIEEGQRLTDDCARMILSLPVTNPDVPHAGRRALLFGRRSGENA.

The protein belongs to the HupJ family.

In Escherichia coli O157:H7, this protein is Hydrogenase-2 operon protein HybE (hybE).